Here is a 193-residue protein sequence, read N- to C-terminus: Ion-translocating oxidoreductase complex subunit A (193 aa).

Transmembrane regions (helical) follow at residues Leu-5 to Leu-25, Ile-39 to Val-59, Phe-62 to Ala-82, Leu-102 to Leu-122, Ala-134 to Ile-154, and Ser-171 to Val-191.

It belongs to the NqrDE/RnfAE family. The complex is composed of six subunits: RnfA, RnfB, RnfC, RnfD, RnfE and RnfG.

The protein resides in the cell inner membrane. Its function is as follows. Part of a membrane-bound complex that couples electron transfer with translocation of ions across the membrane. The protein is Ion-translocating oxidoreductase complex subunit A of Yersinia pestis bv. Antiqua (strain Nepal516).